A 144-amino-acid polypeptide reads, in one-letter code: uncharacterized protein (144 aa).

4 consecutive transmembrane segments (helical) span residues 27–47 (VVCALAELVGVLLIDIDIPDI), 49–69 (LLPIDILAIDDIVDANVLLAL), 83–103 (IVLLALDIASMLIDAILDATV), and 106–126 (ALDMASIFMLLPIFIPSILNV).

Its subcellular location is the membrane. This is an uncharacterized protein from Saccharomyces cerevisiae (strain ATCC 204508 / S288c) (Baker's yeast).